The primary structure comprises 405 residues: Succinyl-CoA--L-malate CoA-transferase beta subunit (405 aa).

Catalysis depends on Asp-175, which acts as the Nucleophile.

This sequence belongs to the CoA-transferase III family. In terms of assembly, forms a large complex composed of six heterodimers (alpha, beta).

The catalysed reaction is succinyl-CoA + (S)-malate = (S)-malyl-CoA + succinate. It carries out the reaction (3S)-citramalate + succinyl-CoA = (3S)-citramalyl-CoA + succinate. Involved in the 3-hydroxypropionate cycle used for autotrophic carbon dioxide fixation. Catalyzes the transfer of CoA moiety from succinyl-CoA to L-malate to yield L-malyl-CoA. In Chloroflexus aurantiacus (strain ATCC 29366 / DSM 635 / J-10-fl), this protein is Succinyl-CoA--L-malate CoA-transferase beta subunit (smtB).